We begin with the raw amino-acid sequence, 77 residues long: Tachyplesin-2 (77 aa).

The first 23 residues, 1 to 23 (MKKLVIALCLMMVLAVMVEEAEA), serve as a signal peptide directing secretion. Intrachain disulfides connect C26/C39 and C30/C35. An Arginine amide modification is found at R40. The propeptide occupies 41–77 (GKRNEVRQYRDRGYDVRAIPDETFFTRQDEDEDDDEE).

It belongs to the tachyplesin/polyphemusin family. As to expression, hemocytes.

The protein resides in the secreted. Significantly inhibits the growth of Gram-negative and Gram-positive bacteria. The polypeptide is Tachyplesin-2 (Tachypleus tridentatus (Japanese horseshoe crab)).